We begin with the raw amino-acid sequence, 1330 residues long: DNA-directed RNA polymerase subunit beta'' (1330 aa).

C214, C282, C289, and C292 together coordinate Zn(2+).

This sequence belongs to the RNA polymerase beta' chain family. RpoC2 subfamily. In terms of assembly, in plastids the minimal PEP RNA polymerase catalytic core is composed of four subunits: alpha, beta, beta', and beta''. When a (nuclear-encoded) sigma factor is associated with the core the holoenzyme is formed, which can initiate transcription. The cofactor is Zn(2+).

It is found in the plastid. It localises to the chloroplast. The enzyme catalyses RNA(n) + a ribonucleoside 5'-triphosphate = RNA(n+1) + diphosphate. Functionally, DNA-dependent RNA polymerase catalyzes the transcription of DNA into RNA using the four ribonucleoside triphosphates as substrates. The protein is DNA-directed RNA polymerase subunit beta'' of Physcomitrium patens (Spreading-leaved earth moss).